The chain runs to 168 residues: Photosystem I assembly protein Ycf3 (168 aa).

TPR repeat units lie at residues 35–68 (AFTY…EIDP), 72–105 (SYIL…NPFL), and 120–153 (GEQA…TPGN).

The protein belongs to the Ycf3 family.

It localises to the plastid. The protein resides in the chloroplast thylakoid membrane. Functionally, essential for the assembly of the photosystem I (PSI) complex. May act as a chaperone-like factor to guide the assembly of the PSI subunits. In Panax ginseng (Korean ginseng), this protein is Photosystem I assembly protein Ycf3.